A 300-amino-acid polypeptide reads, in one-letter code: Delta(7)-sterol 5(6)-desaturase erg31 (300 aa).

3 helical membrane-spanning segments follow: residues Ile-33–Leu-53, Val-78–Ala-98, and Tyr-117–His-137. Positions Pro-123 to Asn-248 constitute a Fatty acid hydroxylase domain. The Histidine box-1 signature appears at His-137 to His-141. The Histidine box-2 signature appears at His-150–His-154. A helical membrane pass occupies residues His-180 to Val-200. A Histidine box-3 motif is present at residues His-225–His-229.

Belongs to the sterol desaturase family. Requires Fe cation as cofactor.

Its subcellular location is the endoplasmic reticulum membrane. The catalysed reaction is episterol + 2 Fe(II)-[cytochrome b5] + O2 + 2 H(+) = 5-dehydroepisterol + 2 Fe(III)-[cytochrome b5] + 2 H2O. The protein operates within steroid metabolism; ergosterol biosynthesis. C-5 sterol desaturase; part of the third module of ergosterol biosynthesis pathway that includes by the late steps of the pathway. Erg31 and erg32 catalyze the introduction of a C-5 double bond in the B ring to produce 5-dehydroepisterol. The third module or late pathway involves the ergosterol synthesis itself through consecutive reactions that mainly occur in the endoplasmic reticulum (ER) membrane. Firstly, the squalene synthase erg9 catalyzes the condensation of 2 farnesyl pyrophosphate moieties to form squalene, which is the precursor of all steroids. Secondly, squalene is converted into lanosterol by the consecutive action of the squalene epoxidase erg1 and the lanosterol synthase erg7. The lanosterol 14-alpha-demethylase erg11/cyp1 catalyzes C14-demethylation of lanosterol to produce 4,4'-dimethyl cholesta-8,14,24-triene-3-beta-ol. In the next steps, a complex process involving various demethylation, reduction and desaturation reactions catalyzed by the C-14 reductase erg24 and the C-4 demethylation complex erg25-erg26-erg27 leads to the production of zymosterol. Erg28 likely functions in the C-4 demethylation complex reaction by tethering erg26 and Erg27 to the endoplasmic reticulum or to facilitate interaction between these proteins. Then, the sterol 24-C-methyltransferase erg6 catalyzes the methyl transfer from S-adenosyl-methionine to the C-24 of zymosterol to form fecosterol. The C-8 sterol isomerase erg2 catalyzes the reaction which results in unsaturation at C-7 in the B ring of sterols and thus converts fecosterol to episterol. The sterol-C5-desaturases erg31 and erg32 then catalyze the introduction of a C-5 double bond in the B ring to produce 5-dehydroepisterol. The C-22 sterol desaturase erg5 further converts 5-dehydroepisterol into ergosta-5,7,22,24(28)-tetraen-3beta-ol by forming the C-22(23) double bond in the sterol side chain. Finally, ergosta-5,7,22,24(28)-tetraen-3beta-ol is substrate of the C-24(28) sterol reductase erg4 to produce ergosterol. In the genus Schizosaccharomyces, a second route exists between lanosterol and fecosterol, via the methylation of lanosterol to eburicol by erg6, followed by C14-demethylation by erg11/cyp1 and C4-demethylation by the demethylation complex erg25-erg26-erg27. The sequence is that of Delta(7)-sterol 5(6)-desaturase erg31 from Schizosaccharomyces pombe (strain 972 / ATCC 24843) (Fission yeast).